A 195-amino-acid chain; its full sequence is Phosphoheptose isomerase (195 aa).

An SIS domain is found at 36-195 (LAHCLLSDGK…DLVDHQLFGE (160 aa)). 51–53 (NGG) contacts substrate. 2 residues coordinate Zn(2+): His60 and Glu64. Residues Glu64, 93 to 94 (ND), 119 to 121 (STS), Ser124, and Gln174 contribute to the substrate site. Residues Gln174 and His182 each contribute to the Zn(2+) site.

The protein belongs to the SIS family. GmhA subfamily. Homotetramer. The cofactor is Zn(2+).

The protein localises to the cytoplasm. The enzyme catalyses 2 D-sedoheptulose 7-phosphate = D-glycero-alpha-D-manno-heptose 7-phosphate + D-glycero-beta-D-manno-heptose 7-phosphate. It functions in the pathway carbohydrate biosynthesis; D-glycero-D-manno-heptose 7-phosphate biosynthesis; D-glycero-alpha-D-manno-heptose 7-phosphate and D-glycero-beta-D-manno-heptose 7-phosphate from sedoheptulose 7-phosphate: step 1/1. Its function is as follows. Catalyzes the isomerization of sedoheptulose 7-phosphate in D-glycero-D-manno-heptose 7-phosphate. This is Phosphoheptose isomerase from Methylococcus capsulatus (strain ATCC 33009 / NCIMB 11132 / Bath).